The following is a 384-amino-acid chain: Putative aminohydrolase MTH_994 (384 aa).

Zn(2+) is bound by residues H60, H62, H207, and D291.

Belongs to the metallo-dependent hydrolases superfamily. ATZ/TRZ family.

The chain is Putative aminohydrolase MTH_994 from Methanothermobacter thermautotrophicus (strain ATCC 29096 / DSM 1053 / JCM 10044 / NBRC 100330 / Delta H) (Methanobacterium thermoautotrophicum).